The chain runs to 295 residues: Ethanolamine ammonia-lyase small subunit (295 aa).

Positions 207, 228, and 258 each coordinate adenosylcob(III)alamin.

It belongs to the EutC family. In terms of assembly, the basic unit is a heterodimer which dimerizes to form tetramers. The heterotetramers trimerize; 6 large subunits form a core ring with 6 small subunits projecting outwards. Requires adenosylcob(III)alamin as cofactor.

The protein localises to the bacterial microcompartment. It catalyses the reaction ethanolamine = acetaldehyde + NH4(+). It functions in the pathway amine and polyamine degradation; ethanolamine degradation. Its function is as follows. Catalyzes the deamination of various vicinal amino-alcohols to oxo compounds. Allows this organism to utilize ethanolamine as the sole source of nitrogen and carbon in the presence of external vitamin B12. The chain is Ethanolamine ammonia-lyase small subunit from Escherichia coli O139:H28 (strain E24377A / ETEC).